Consider the following 303-residue polypeptide: 2-dehydropantoate 2-reductase (303 aa).

NADP(+) contacts are provided by residues 7–12 (GCGALG), Asn98, and Ala122. Position 98 (Asn98) interacts with substrate. The active-site Proton donor is the Lys176. Substrate-binding residues include Asn180, Asn184, Asn194, and Ser244. Residue Glu256 participates in NADP(+) binding.

This sequence belongs to the ketopantoate reductase family. Monomer.

It localises to the cytoplasm. It carries out the reaction (R)-pantoate + NADP(+) = 2-dehydropantoate + NADPH + H(+). Its pathway is cofactor biosynthesis; (R)-pantothenate biosynthesis; (R)-pantoate from 3-methyl-2-oxobutanoate: step 2/2. Its function is as follows. Catalyzes the NADPH-dependent reduction of ketopantoate into pantoic acid. The protein is 2-dehydropantoate 2-reductase (panE) of Salmonella typhi.